A 669-amino-acid polypeptide reads, in one-letter code: DNA ligase 2 (669 aa).

NAD(+) is bound by residues 35-39 (DKEYD) and 83-84 (SL). The active-site N6-AMP-lysine intermediate is Lys125. The NAD(+) site is built by Arg147, Glu181, and Lys317. Zn(2+)-binding residues include Cys410, Cys413, Cys426, and Cys432. A BRCT domain is found at 590 to 669 (VVENAFTGKT…EEFEQLINNM (80 aa)).

Belongs to the NAD-dependent DNA ligase family. LigA subfamily. It depends on Mg(2+) as a cofactor. Requires Mn(2+) as cofactor.

The enzyme catalyses NAD(+) + (deoxyribonucleotide)n-3'-hydroxyl + 5'-phospho-(deoxyribonucleotide)m = (deoxyribonucleotide)n+m + AMP + beta-nicotinamide D-nucleotide.. Its function is as follows. DNA ligase that catalyzes the formation of phosphodiester linkages between 5'-phosphoryl and 3'-hydroxyl groups in double-stranded DNA using NAD as a coenzyme and as the energy source for the reaction. It is essential for DNA replication and repair of damaged DNA. The protein is DNA ligase 2 of Clostridium acetobutylicum (strain ATCC 824 / DSM 792 / JCM 1419 / IAM 19013 / LMG 5710 / NBRC 13948 / NRRL B-527 / VKM B-1787 / 2291 / W).